Reading from the N-terminus, the 1535-residue chain is Protein artichoke (1535 aa).

Positions 1–19 (MMLLPIFLLLCIGINLIRA) are cleaved as a signal peptide. LRR repeat units follow at residues 64 to 87 (KGRI…FFGS), 89 to 110 (QIVR…WLNE), 112 to 135 (ENGL…SLNG), 136 to 157 (MINM…DFSG), 158 to 181 (LLSL…LFRH), 183 to 206 (PKLQ…LFDG), 207 to 230 (LISL…ALSR), 231 to 256 (LPNL…IVKD), 257 to 280 (LEHL…SFVD), 281 to 304 (LPNL…AFLR), 306 to 328 (PQLK…SLLQ), 331 to 356 (GSGV…LLDA), 357 to 380 (LPRL…ALRG), 382 to 404 (GTLE…ALMA), 406 to 429 (PALR…FWNL), 430 to 452 (PGLK…LLAG), 453 to 476 (LPSL…SFRH), 478 to 500 (PLLE…TLIH), 521 to 545 (LPRI…ASKD), 548 to 571 (LPNL…GFQG), 573 to 595 (MELR…SFIG), 597 to 619 (QRLE…ALLP), 620 to 643 (LAEL…FFSN), 645 to 667 (SRLE…AFDT), 669 to 691 (RSLE…LGNL), 692 to 714 (NNLR…VIGG), 716 to 738 (RNVV…TFRN), 739 to 762 (LPKL…ALKG), 764 to 786 (DELQ…VFEE), 788 to 810 (PSLL…SFHN), 811 to 834 (ANSL…GLRS), 835 to 858 (MRNL…PLKA), 860 to 882 (NWLV…PFET), and 883 to 906 (MPRL…TFRN). The 45-residue stretch at 919-963 (NPIDCNCEMQWLSVWLQETNFPYPGPKCQDGRLLRSARMERSLCV) folds into the LRRCT domain. Disordered stretches follow at residues 1036–1055 (HSAI…NSNI), 1253–1331 (TQAR…DSQY), 1377–1416 (VTTT…GRST), and 1429–1449 (AQPT…EGVA). Residues 1253-1270 (TQARPKPTKSSGESSETA) are compositionally biased toward polar residues. Low complexity-rich tracts occupy residues 1271–1285 (TYEV…TTTT) and 1293–1315 (TSTT…TQVT). Composition is skewed to polar residues over residues 1316-1328 (PAEN…TELD) and 1377-1391 (VTTT…NQVT). Pro residues predominate over residues 1398–1407 (TVPPPPPASP).

It is found in the secreted. The protein localises to the extracellular space. It localises to the extracellular matrix. The protein resides in the cytoplasm. Functionally, required for normal morphology and function of ciliated sensory organs. This is Protein artichoke from Drosophila melanogaster (Fruit fly).